The sequence spans 487 residues: Phosphoglucosamine mutase (487 aa).

Ser-134 functions as the Phosphoserine intermediate in the catalytic mechanism. 4 residues coordinate Mg(2+): Ser-134, Asp-277, Asp-279, and Asp-281. Ser-134 is subject to Phosphoserine.

This sequence belongs to the phosphohexose mutase family. It depends on Mg(2+) as a cofactor. Post-translationally, activated by phosphorylation.

The enzyme catalyses alpha-D-glucosamine 1-phosphate = D-glucosamine 6-phosphate. In terms of biological role, catalyzes the conversion of glucosamine-6-phosphate to glucosamine-1-phosphate. This is Phosphoglucosamine mutase from Gloeothece citriformis (strain PCC 7424) (Cyanothece sp. (strain PCC 7424)).